Here is a 200-residue protein sequence, read N- to C-terminus: GTP cyclohydrolase 1 (200 aa).

Zn(2+) contacts are provided by C87, H90, and C158.

This sequence belongs to the GTP cyclohydrolase I family. Toroid-shaped homodecamer, composed of two pentamers of five dimers.

It catalyses the reaction GTP + H2O = 7,8-dihydroneopterin 3'-triphosphate + formate + H(+). It functions in the pathway cofactor biosynthesis; 7,8-dihydroneopterin triphosphate biosynthesis; 7,8-dihydroneopterin triphosphate from GTP: step 1/1. The chain is GTP cyclohydrolase 1 from Xanthomonas campestris pv. campestris (strain ATCC 33913 / DSM 3586 / NCPPB 528 / LMG 568 / P 25).